The following is a 315-amino-acid chain: Small ribosomal subunit biogenesis GTPase RsgA (315 aa).

The CP-type G domain maps to Asp82–Phe246. GTP is bound by residues Asn130–Asp133 and Gly184–Ser192. Zn(2+)-binding residues include Cys270, Cys275, His277, and Cys283.

It belongs to the TRAFAC class YlqF/YawG GTPase family. RsgA subfamily. In terms of assembly, monomer. Associates with 30S ribosomal subunit, binds 16S rRNA. Requires Zn(2+) as cofactor.

The protein localises to the cytoplasm. One of several proteins that assist in the late maturation steps of the functional core of the 30S ribosomal subunit. Helps release RbfA from mature subunits. May play a role in the assembly of ribosomal proteins into the subunit. Circularly permuted GTPase that catalyzes slow GTP hydrolysis, GTPase activity is stimulated by the 30S ribosomal subunit. The sequence is that of Small ribosomal subunit biogenesis GTPase RsgA from Ralstonia pickettii (strain 12J).